We begin with the raw amino-acid sequence, 381 residues long: Transcriptional regulatory protein FlgR (381 aa).

The Response regulatory domain maps to 2–113; that stretch reads KIAIVEDDIN…LLLESIYRTK (112 aa). Asp-51 is subject to 4-aspartylphosphate. The Sigma-54 factor interaction domain maps to 136–365; the sequence is FLAASKALEE…LLGVVERAAI (230 aa). ATP contacts are provided by residues 164–171 and 227–236; these read GESGVGKE and ANKGTIFLDE.

Post-translationally, phosphorylated by FlgS.

Functionally, member of the two-component regulatory system FlgR/FlgS that induces the transcriptional induction of the genes needed in motility and flagellar biogenesis. Upon phosphorylation by FlgS, functions as a transcriptional regulator and activates transcription of RpoN-dependent flagellar genes. In Helicobacter pylori (strain ATCC 700392 / 26695) (Campylobacter pylori), this protein is Transcriptional regulatory protein FlgR (flgR).